An 85-amino-acid chain; its full sequence is Transcriptional repressor protein KorC (85 aa).

Positions 28-47 (VLHLAGLTGGQAARILGLGA) form a DNA-binding region, H-T-H motif.

Functionally, acts with KorA as corepressor in the control of the kilC and kilE operons. The sequence is that of Transcriptional repressor protein KorC (korC) from Escherichia coli.